The chain runs to 718 residues: Homeobox-leucine zipper protein HDG9 (718 aa).

The segment covering Met1–Glu12 has biased composition (basic and acidic residues). Positions Met1–Asn35 are disordered. The segment at residues Glu26 to Asn85 is a DNA-binding region (homeobox). The stretch at Arg78–Asn152 forms a coiled coil. The disordered stretch occupies residues Pro169–Gly209. The segment covering Asn176–Arg194 has biased composition (polar residues). An START domain is found at Ser232–Phe464.

The protein belongs to the HD-ZIP homeobox family. Class IV subfamily. As to expression, expressed in anthers with highest levels in the tapetum and pollen grains, and chalazal end of the embryo sac.

The protein resides in the nucleus. Probable transcription factor that binds to the DNA sequence 5'-GCATTAAATGCGCA-3'. The protein is Homeobox-leucine zipper protein HDG9 (HDG9) of Arabidopsis thaliana (Mouse-ear cress).